The chain runs to 234 residues: Probable transcriptional regulatory protein MYCGA1330 (234 aa).

Belongs to the TACO1 family.

Its subcellular location is the cytoplasm. This chain is Probable transcriptional regulatory protein MYCGA1330, found in Mycoplasmoides gallisepticum (strain R(low / passage 15 / clone 2)) (Mycoplasma gallisepticum).